A 406-amino-acid chain; its full sequence is MIHTNLKKKFSCCVLVFLLFAVICVWKEKKKGSYYDSFKLQTKEFQVLKSLGKLAMGSDSQSVSSSSTQDPHRGRQTLGSLRGLAKAKPEASFQVWNKDSSSKNLIPRLQKIWKNYLSMNKYKVSYKGPGPGIKFSAEALRCHLRDHVNVSMVEVTDFPFNTSEWEGYLPKESIRTKAGPWGRCAVVSSAGSLKSSQLGREIDDHDAVLRFNGAPTANFQQDVGTKTTIRLMNSQLVTTEKRFLKDSLYNEGILIVWDPSVYHSDIPKWYQNPDYNFFNNYKTYRKLHPNQPFYILKPQMPWELWDILQEISPEEIQPNPPSSGMLGIIIMMTLCDQVDIYEFLPSKRKTDVCYYYQKFFDSACTMGAYHPLLYEKNLVKHLNQGTDEDIYLLGKATLPGFRTIHC.

Over 1-9 (MIHTNLKKK) the chain is Cytoplasmic. The helical; Signal-anchor for type II membrane protein transmembrane segment at 10-26 (FSCCVLVFLLFAVICVW) threads the bilayer. The Lumenal portion of the chain corresponds to 27 to 406 (KEKKKGSYYD…TLPGFRTIHC (380 aa)). 3 disulfides stabilise this stretch: Cys-142/Cys-406, Cys-184/Cys-335, and Cys-353/Cys-364. Asn-149 and Asn-161 each carry an N-linked (GlcNAc...) asparagine glycan. Substrate contacts are provided by residues Ser-189, Asn-212, Asn-233, 322–324 (SSG), Cys-353, Tyr-354, Thr-365, Tyr-369, His-370, and Lys-376. Residue Tyr-369 is modified to Phosphotyrosine.

It belongs to the glycosyltransferase 29 family. As to quaternary structure, monomer and homodimer. Post-translationally, N-glycosylated.

The protein localises to the golgi apparatus. Its subcellular location is the golgi stack membrane. It is found in the secreted. It catalyses the reaction a beta-D-galactoside + CMP-N-acetyl-beta-neuraminate = an N-acetyl-alpha-neuraminyl-(2-&gt;6)-beta-D-galactosyl derivative + CMP + H(+). It participates in protein modification; protein glycosylation. Inhibited by CTP. Transfers sialic acid from CMP-sialic acid to galactose-containing acceptor substrates. In B lymphocytes, generates neuraminidase-sensitive lymphocyte cell-surface differentiation antigens, such as CDw75, HB-6 and CD76. The chain is Beta-galactoside alpha-2,6-sialyltransferase 1 (ST6GAL1) from Homo sapiens (Human).